The sequence spans 602 residues: Leucine-rich repeat-containing protein 40 (602 aa).

Residues 1–20 form a disordered region; it reads MSRLKRIAGQDPRAGFKAAG. Position 71 is a phosphoserine (Ser71). 20 LRR repeats span residues 83–104, 106–127, 129–150, 152–173, 175–196, 198–219, 221–242, 244–265, 266–286, 290–311, 313–335, 336–356, 400–421, 426–447, 450–471, 473–494, 496–517, 519–540, 543–564, and 566–586; these read DLTK…LRLL, ALTV…MREL, NLQK…ITNL, NLKC…FEQL, NLED…FSSL, SLVR…INRM, RLKH…LAGM, SLEL…PSCS, LLKE…EHLK, SILV…IILL, SLER…GNLH, LKFL…IINK, TLKI…VFNA, IITS…MVEL, MVSD…LCML, KLTF…MESL, RLQT…LYRI, TLET…KMKM, NLTT…LGNC, and NLRT…AILI.

This chain is Leucine-rich repeat-containing protein 40 (LRRC40), found in Macaca fascicularis (Crab-eating macaque).